The following is a 160-amino-acid chain: MKIMISQVGRELYKVPLRILDHRVFVNGEIEAFLENFEVRRNDSEVEKLFQVTETVGSLKYDLSRCSATGRGSGAENLAQLDTEVSHLLDGVNALLAKAKVERTASTQLQEARLAREQRRAEFLTNLEHGYRRIENSFEEKEEEIAELYSDLQLKLNIAK.

Belongs to the BLOC1S5 family. As to quaternary structure, component of the biogenesis of lysosome-related organelles complex-1 (BLOC-1) composed of Blos1, Blos2, Blos3, Blos4, Dysb, Muted, Pldn and Snapin.

Functionally, component of the biogenesis of lysosome-related organelles complex-1 (BLOC-1) involved in pigment granule biogenesis. The polypeptide is Biogenesis of lysosome-related organelles complex 1 subunit 5 (Drosophila melanogaster (Fruit fly)).